The following is a 316-amino-acid chain: Actin patches distal protein 1 (316 aa).

Belongs to the APD1 family.

It localises to the cytoplasm. The protein resides in the nucleus. In terms of biological role, required for normal localization of actin patches. Involved in tolerance to sodium ions and hydrogen peroxide. This is Actin patches distal protein 1 (APD1) from Saccharomyces cerevisiae (strain ATCC 204508 / S288c) (Baker's yeast).